The chain runs to 65 residues: Ferredoxin-like protein in vnf region (65 aa).

4Fe-4S ferredoxin-type domains follow at residues 2–29 (AMAI…VLQG) and 30–65 (GIYV…PLDD). Residues Cys10, Cys13, Cys16, Cys20, Cys39, Cys42, Cys50, and Cys54 each coordinate [4Fe-4S] cluster.

[4Fe-4S] cluster serves as cofactor.

This is Ferredoxin-like protein in vnf region from Azotobacter chroococcum mcd 1.